The sequence spans 75 residues: MLIPYEQLQAETLTRLIEDFVTRDGTDNGDDTPLETRVLRVRQALAKGQAFILFDPESQQCQLLAKHDVPRELLD.

The protein belongs to the UPF0270 family.

This chain is UPF0270 protein PputGB1_1339, found in Pseudomonas putida (strain GB-1).